A 457-amino-acid polypeptide reads, in one-letter code: Argininosuccinate lyase (457 aa).

It belongs to the lyase 1 family. Argininosuccinate lyase subfamily.

Its subcellular location is the cytoplasm. It carries out the reaction 2-(N(omega)-L-arginino)succinate = fumarate + L-arginine. It participates in amino-acid biosynthesis; L-arginine biosynthesis; L-arginine from L-ornithine and carbamoyl phosphate: step 3/3. The chain is Argininosuccinate lyase from Escherichia coli O1:K1 / APEC.